The following is a 219-amino-acid chain: UPF0376 protein C36C5.12 (219 aa).

Residues 1 to 20 (MGRLDVKNSWIEFHQDEMTS) lie on the Cytoplasmic side of the membrane. Residues 21 to 43 (FLKLAIIGTVLLGVAHGANLTAA) form a helical; Signal-anchor for type II membrane protein membrane-spanning segment. Residues 44-219 (EKETYCELRS…VSKCDFSRLG (176 aa)) lie on the Extracellular side of the membrane. Asparagine 104 and asparagine 204 each carry an N-linked (GlcNAc...) asparagine glycan.

It belongs to the UPF0376 family.

It is found in the membrane. The protein is UPF0376 protein C36C5.12 of Caenorhabditis elegans.